A 412-amino-acid polypeptide reads, in one-letter code: MEFLKKVDPDIFGLIEEEDQRQRRNIELIASENFVSDAVMEAAGSCLTNKYAEGYPHKRYYGGCEVVDKVEELAIARARELFGAEHVNVQPHSGSQANQAVYFATVPPGGTILAMDLTHGGHLTHGSPVNMSGKYYNFIHYGVTREEEVIDFDQVRELARKHQPDLIVAGASAYPRIIDFEVFREIADEVGALFMVDMAHIAGLVAAGLHPSPVPVADFVTTTTHKTLRGTRGGLILCKGEHAKKIDKAIFPGLQGGPLLHIIAAKAVTFKEALQDEFKGYQKQIVSNAKTMAAELKNYGFRLVSGGTDNHLMLVDLTNMDITGKDAETALDKVGITVNKNTIPFEKRSPFVTSGIRIGTPAVTTRGMKEKEMKLIAKLIYQTLKNINDEGRLTEIRQEVYRLSERFPKTAE.

(6S)-5,6,7,8-tetrahydrofolate contacts are provided by residues leucine 117 and 121-123; that span reads GHL. Lysine 226 bears the N6-(pyridoxal phosphate)lysine mark. 349–351 is a binding site for (6S)-5,6,7,8-tetrahydrofolate; that stretch reads SPF.

The protein belongs to the SHMT family. Homodimer. Pyridoxal 5'-phosphate serves as cofactor.

It is found in the cytoplasm. It carries out the reaction (6R)-5,10-methylene-5,6,7,8-tetrahydrofolate + glycine + H2O = (6S)-5,6,7,8-tetrahydrofolate + L-serine. Its pathway is one-carbon metabolism; tetrahydrofolate interconversion. It participates in amino-acid biosynthesis; glycine biosynthesis; glycine from L-serine: step 1/1. Its function is as follows. Catalyzes the reversible interconversion of serine and glycine with tetrahydrofolate (THF) serving as the one-carbon carrier. This reaction serves as the major source of one-carbon groups required for the biosynthesis of purines, thymidylate, methionine, and other important biomolecules. Also exhibits THF-independent aldolase activity toward beta-hydroxyamino acids, producing glycine and aldehydes, via a retro-aldol mechanism. This is Serine hydroxymethyltransferase from Halothermothrix orenii (strain H 168 / OCM 544 / DSM 9562).